Consider the following 484-residue polypeptide: tRNA-2-methylthio-N(6)-dimethylallyladenosine synthase (484 aa).

Positions 36–153 (GKLYIKTHGC…LPELIRARRE (118 aa)) constitute an MTTase N-terminal domain. [4Fe-4S] cluster-binding residues include Cys45, Cys82, Cys116, Cys190, Cys194, and Cys197. The Radical SAM core domain occupies 176–415 (RAEGPSAFVS…HINAHAASIS (240 aa)). The 64-residue stretch at 416–479 (QSMVGSVQRV…SNSLRGRIQL (64 aa)) folds into the TRAM domain. Residues 428 to 450 (EGPSRRDPNELTGKSENMRPVNF) are disordered.

This sequence belongs to the methylthiotransferase family. MiaB subfamily. In terms of assembly, monomer. The cofactor is [4Fe-4S] cluster.

Its subcellular location is the cytoplasm. The catalysed reaction is N(6)-dimethylallyladenosine(37) in tRNA + (sulfur carrier)-SH + AH2 + 2 S-adenosyl-L-methionine = 2-methylsulfanyl-N(6)-dimethylallyladenosine(37) in tRNA + (sulfur carrier)-H + 5'-deoxyadenosine + L-methionine + A + S-adenosyl-L-homocysteine + 2 H(+). Functionally, catalyzes the methylthiolation of N6-(dimethylallyl)adenosine (i(6)A), leading to the formation of 2-methylthio-N6-(dimethylallyl)adenosine (ms(2)i(6)A) at position 37 in tRNAs that read codons beginning with uridine. This Xanthomonas euvesicatoria pv. vesicatoria (strain 85-10) (Xanthomonas campestris pv. vesicatoria) protein is tRNA-2-methylthio-N(6)-dimethylallyladenosine synthase.